The primary structure comprises 458 residues: MIATKGRNVVVVGTQWGDEGKGKLVDWLTESAQGVVRFQGGHNAGHTLVIHGVKTALHLVPSGIMRPGVKCYIGNGVVLSAAKLFEEIEALEKAGVELRSRLRISEACPLILPFHAALDVAREAAREQGGQAKIGTTGRGIGPAYEDKIARRALRVQDLKFPERFARKLHELLDLHNHVLTTYLGSVAFDFGPTLAPYMADGKVLFQPVFDEAMRHAQLLKPMMADVSRELNEAHLKGANLLFEGAQGTLLDVDHGTYPYVTSSNCVAGNAAAGSGVGPGMLHYVLGITKAYCTRVGGGPFPTELAWEVEGTPGYHMSTVGAEKGVTTGRSRRCGWFDAALLKRSAQVNGLTGLCITKLDVLDGLKELKLCTGYQLDGELTDILPMGADDIERCTPVYETISGWSDSTVGVTQFDKLPTNARLYLQRIEQITGVPIHMVSTGPDRAQTILMRHPYLAD.

GTP is bound by residues 17-23 (GDEGKGK) and 45-47 (GHT). Asp18 acts as the Proton acceptor in catalysis. The Mg(2+) site is built by Asp18 and Gly45. IMP-binding positions include 18 to 21 (DEGK), 43 to 46 (NAGH), Thr137, Arg151, Gln247, Thr262, and Arg330. The active-site Proton donor is the His46. Position 326–332 (326–332 (VTTGRSR)) interacts with substrate. GTP is bound by residues Arg332, 358–360 (KLD), and 440–442 (STG).

The protein belongs to the adenylosuccinate synthetase family. In terms of assembly, homodimer. Mg(2+) is required as a cofactor.

The protein localises to the cytoplasm. The catalysed reaction is IMP + L-aspartate + GTP = N(6)-(1,2-dicarboxyethyl)-AMP + GDP + phosphate + 2 H(+). It participates in purine metabolism; AMP biosynthesis via de novo pathway; AMP from IMP: step 1/2. Functionally, plays an important role in the de novo pathway of purine nucleotide biosynthesis. Catalyzes the first committed step in the biosynthesis of AMP from IMP. The polypeptide is Adenylosuccinate synthetase (Albidiferax ferrireducens (strain ATCC BAA-621 / DSM 15236 / T118) (Rhodoferax ferrireducens)).